The primary structure comprises 459 residues: Anthocyanidin 3-O-glucoside 2''-O-glucosyltransferase (459 aa).

H20 (proton acceptor) is an active-site residue. Residue H20 coordinates an anthocyanidin. D117 functions as the Charge relay in the catalytic mechanism. T138, V335, Q337, H352, W355, S357, and E360 together coordinate UDP-alpha-D-glucose. G375 serves as a coordination point for an anthocyanidin. Residues D376 and Q377 each coordinate UDP-alpha-D-glucose.

The protein belongs to the UDP-glycosyltransferase family.

It carries out the reaction an anthocyanidin 3-O-beta-D-glucoside + UDP-alpha-D-glucose = an anthocyanidin 3-O-sophoroside + UDP + 2 H(+). It participates in pigment biosynthesis; anthocyanin biosynthesis. Glycosyltransferase that mediates the glucosylation of anthocyanidin 3-O-glucosides to yield anthocyanidin 3-O-sophorosides. 3-O-sophoroside derivatives are required for the color of flowers. This chain is Anthocyanidin 3-O-glucoside 2''-O-glucosyltransferase (3GGT), found in Ipomoea purpurea (Common morning glory).